We begin with the raw amino-acid sequence, 200 residues long: Recombination protein RecR (200 aa).

A C4-type zinc finger spans residues 57–72 (CRSCRTLTEEELCPQC). The region spanning 80-175 (TLLCVVEGPT…VASRIAHGVP (96 aa)) is the Toprim domain.

It belongs to the RecR family.

May play a role in DNA repair. It seems to be involved in an RecBC-independent recombinational process of DNA repair. It may act with RecF and RecO. This chain is Recombination protein RecR, found in Pseudomonas savastanoi pv. phaseolicola (strain 1448A / Race 6) (Pseudomonas syringae pv. phaseolicola (strain 1448A / Race 6)).